The primary structure comprises 299 residues: Zinc import ATP-binding protein ZnuC (299 aa).

The ABC transporter domain maps to Val-13–Thr-228. Residue Gly-45–Ser-52 coordinates ATP.

The protein belongs to the ABC transporter superfamily. Zinc importer (TC 3.A.1.15.5) family. The complex is composed of two ATP-binding proteins (ZnuC), two transmembrane proteins (ZnuB) and a solute-binding protein (ZnuA).

Its subcellular location is the cell inner membrane. It carries out the reaction Zn(2+)(out) + ATP(in) + H2O(in) = Zn(2+)(in) + ADP(in) + phosphate(in) + H(+)(in). Part of the ABC transporter complex ZnuABC involved in zinc import. Responsible for energy coupling to the transport system. The chain is Zinc import ATP-binding protein ZnuC from Agrobacterium fabrum (strain C58 / ATCC 33970) (Agrobacterium tumefaciens (strain C58)).